Reading from the N-terminus, the 456-residue chain is Argininosuccinate lyase (456 aa).

Belongs to the lyase 1 family. Argininosuccinate lyase subfamily.

It is found in the cytoplasm. It catalyses the reaction 2-(N(omega)-L-arginino)succinate = fumarate + L-arginine. Its pathway is amino-acid biosynthesis; L-arginine biosynthesis; L-arginine from L-ornithine and carbamoyl phosphate: step 3/3. This Shewanella woodyi (strain ATCC 51908 / MS32) protein is Argininosuccinate lyase.